A 227-amino-acid polypeptide reads, in one-letter code: Cytochrome c oxidase subunit 2 (227 aa).

Topologically, residues 1 to 14 are mitochondrial intermembrane; it reads MAYPFQLGLQDATS. A helical transmembrane segment spans residues 15-45; it reads PIMEELLHFHDHTLMIVFLISSLVLYIISSM. The Mitochondrial matrix portion of the chain corresponds to 46–59; that stretch reads LTTKLTHTSTMDAQ. Residues 60-87 traverse the membrane as a helical segment; that stretch reads EVETVWTILPAIILVLIALPSLRILYMM. The Mitochondrial intermembrane segment spans residues 88 to 227; the sequence is DEINNPSLTV…YFETWSALML (140 aa). Residues histidine 161, cysteine 196, glutamate 198, cysteine 200, histidine 204, and methionine 207 each coordinate Cu cation. Glutamate 198 lines the Mg(2+) pocket. Tyrosine 218 is modified (phosphotyrosine).

This sequence belongs to the cytochrome c oxidase subunit 2 family. In terms of assembly, component of the cytochrome c oxidase (complex IV, CIV), a multisubunit enzyme composed of 14 subunits. The complex is composed of a catalytic core of 3 subunits MT-CO1, MT-CO2 and MT-CO3, encoded in the mitochondrial DNA, and 11 supernumerary subunits COX4I, COX5A, COX5B, COX6A, COX6B, COX6C, COX7A, COX7B, COX7C, COX8 and NDUFA4, which are encoded in the nuclear genome. The complex exists as a monomer or a dimer and forms supercomplexes (SCs) in the inner mitochondrial membrane with NADH-ubiquinone oxidoreductase (complex I, CI) and ubiquinol-cytochrome c oxidoreductase (cytochrome b-c1 complex, complex III, CIII), resulting in different assemblies (supercomplex SCI(1)III(2)IV(1) and megacomplex MCI(2)III(2)IV(2)). Found in a complex with TMEM177, COA6, COX18, COX20, SCO1 and SCO2. Interacts with TMEM177 in a COX20-dependent manner. Interacts with COX20. Interacts with COX16. Requires Cu cation as cofactor.

The protein resides in the mitochondrion inner membrane. The enzyme catalyses 4 Fe(II)-[cytochrome c] + O2 + 8 H(+)(in) = 4 Fe(III)-[cytochrome c] + 2 H2O + 4 H(+)(out). Functionally, component of the cytochrome c oxidase, the last enzyme in the mitochondrial electron transport chain which drives oxidative phosphorylation. The respiratory chain contains 3 multisubunit complexes succinate dehydrogenase (complex II, CII), ubiquinol-cytochrome c oxidoreductase (cytochrome b-c1 complex, complex III, CIII) and cytochrome c oxidase (complex IV, CIV), that cooperate to transfer electrons derived from NADH and succinate to molecular oxygen, creating an electrochemical gradient over the inner membrane that drives transmembrane transport and the ATP synthase. Cytochrome c oxidase is the component of the respiratory chain that catalyzes the reduction of oxygen to water. Electrons originating from reduced cytochrome c in the intermembrane space (IMS) are transferred via the dinuclear copper A center (CU(A)) of subunit 2 and heme A of subunit 1 to the active site in subunit 1, a binuclear center (BNC) formed by heme A3 and copper B (CU(B)). The BNC reduces molecular oxygen to 2 water molecules using 4 electrons from cytochrome c in the IMS and 4 protons from the mitochondrial matrix. In Speothos venaticus (Bush dog), this protein is Cytochrome c oxidase subunit 2 (MT-CO2).